A 372-amino-acid polypeptide reads, in one-letter code: O-methyltransferase bfoE (372 aa).

W186 contacts S-adenosyl-L-methionine. H285 (proton acceptor) is an active-site residue.

Belongs to the class I-like SAM-binding methyltransferase superfamily. Cation-independent O-methyltransferase family.

The protein operates within secondary metabolite biosynthesis. Its function is as follows. Cytochrome P450 monooxygenase; part of the gene cluster that mediates the biosynthesis of bifonsecin B, a dimeric gamma-naphthopyrone. The first step in the biosynthesis of bifonsecin B is the production of gamma-naphthopyrone precursor YWA1 by the non-reducing polyketide synthase albA, via condensation of one acetyl-CoA starter unit with 6 malonyl-CoA units. YWA1 is then methylated by bfoE at position C-6 to yield foncesin which is further methylated at position C-8 by bfoD to produce fonsecin B. A key enzyme in the biosynthetic pathway is the cytochrome P450 monooxygenase bfoB which catalyzes the oxidative dimerization of fonsecin B to bifonsecin B. Bfob also catalyzes the oxidative dimerization of rubrofusarin B into nigerone. The stereoselectivity of bfoB is influenced by the two natural monomeric substrates; homodimerization of fonsecin B yields a stereochemically pure biaryl, M-foncerine B, while rubrofusarin B yields a mixture of enantiomers M- and P-nigerone. The protein is O-methyltransferase bfoE of Aspergillus brasiliensis (strain CBS 101740 / IMI 381727 / IBT 21946).